We begin with the raw amino-acid sequence, 466 residues long: Cysteine--tRNA ligase (466 aa).

Cys28 is a binding site for Zn(2+). Residues 30-40 carry the 'HIGH' region motif; it reads PTVYNYIHIGN. Zn(2+) contacts are provided by Cys208, His233, and Glu237. Positions 265–269 match the 'KMSKS' region motif; that stretch reads KMSKS. Residue Lys268 coordinates ATP.

This sequence belongs to the class-I aminoacyl-tRNA synthetase family. As to quaternary structure, monomer. The cofactor is Zn(2+).

Its subcellular location is the cytoplasm. It carries out the reaction tRNA(Cys) + L-cysteine + ATP = L-cysteinyl-tRNA(Cys) + AMP + diphosphate. The protein is Cysteine--tRNA ligase of Staphylococcus epidermidis (strain ATCC 35984 / DSM 28319 / BCRC 17069 / CCUG 31568 / BM 3577 / RP62A).